The following is a 500-amino-acid chain: Protein psiE (500 aa).

The first 18 residues, 1 to 18, serve as a signal peptide directing secretion; it reads MKLISVLITFLLATVIYS. Asn59 carries N-linked (GlcNAc...) asparagine glycosylation. Residues 114–256 enclose the PA14 domain; the sequence is TYDTTRKIYV…KDYCGVCQGD (143 aa). N-linked (GlcNAc...) asparagine glycosylation is found at Asn314, Asn341, Asn366, Asn420, and Asn469.

It belongs to the prespore-cell-inducing factor family.

It localises to the secreted. The polypeptide is Protein psiE (psiE) (Dictyostelium discoideum (Social amoeba)).